Consider the following 82-residue polypeptide: MSDTIRTLQGRVLSDKMDKSITVAIERKVKHPLYGKFIKRTTKIHAHDEQNQCNAGDIVTIRECRPLSKTKSWTLVEVVTKA.

It belongs to the universal ribosomal protein uS17 family. As to quaternary structure, part of the 30S ribosomal subunit.

In terms of biological role, one of the primary rRNA binding proteins, it binds specifically to the 5'-end of 16S ribosomal RNA. The sequence is that of Small ribosomal subunit protein uS17 from Shewanella pealeana (strain ATCC 700345 / ANG-SQ1).